We begin with the raw amino-acid sequence, 229 residues long: MSFLQDSSFFSMGMWSIGVGAFGAAALALLLANTDMFLSKPQKAALEYLEDIDLKTLEKEPRTFKAKELWEKNGAVIMAVRRPGCFLCRAEAADLMSLKPKLDELGVPLYAVVKEKVKREVEDFQPYFKGEIFLDEKKKFYGPERRKMMLMGLVRLGVWYNSFRAWKGGFSGNFEGEGFILGGVFVIGSGKQGVLLEHREKEFGDRVNLLSVLEAVKKIKPQTPASRQS.

The segment at 14–112 (MWSIGVGAFG…DELGVPLYAV (99 aa)) is thioredoxin fold. Active-site redox-active residues include Cys85 and Cys88.

Belongs to the peroxiredoxin-like PRXL2 family. PRXL2A subfamily. As to expression, expressed by the principal cells of the epididymis. Detected in the head region of epididymal sperm (at protein level). Expressed in bone marrow.

Its subcellular location is the cytoplasm. The protein resides in the secreted. In terms of biological role, involved in redox regulation of the cell. Acts as an antioxidant. Inhibits TNFSF11-induced NFKB1 and JUN activation and osteoclast differentiation. May affect bone resorption and help to maintain bone mass. Acts as a negative regulator of macrophage-mediated inflammation by inhibiting macrophage production of inflammatory cytokines, probably through suppression of the MAPK signaling pathway. The polypeptide is Peroxiredoxin-like 2A (Rattus norvegicus (Rat)).